Reading from the N-terminus, the 222-residue chain is 2-amino-5-formylamino-6-ribosylaminopyrimidin-4(3H)-one 5'-monophosphate deformylase (222 aa).

Residues E29, H31, D40, and H108 each contribute to the Fe cation site.

The protein belongs to the creatininase superfamily. FAPy deformylase family. As to quaternary structure, homodimer. The cofactor is Fe(2+). Zn(2+) serves as cofactor.

The enzyme catalyses 2-amino-5-formylamino-6-(5-phospho-D-ribosylamino)pyrimidin-4(3H)-one + H2O = 2,5-diamino-6-(1-D-ribosylamino)pyrimidin-4(3H)-one 5'-phosphate + formate + H(+). It participates in cofactor biosynthesis; coenzyme F420 biosynthesis. Its pathway is cofactor biosynthesis; riboflavin biosynthesis. Catalyzes the hydrolysis of the formamide of 2-amino-5-formylamino-6-ribosylamino-4(3H)-pyrimidinone 5'-monophosphate (FAPy) to form 2,5-diamino-6-ribosylamino-4(3H)-pyrimidinone 5'-phosphate (APy). The protein is 2-amino-5-formylamino-6-ribosylaminopyrimidin-4(3H)-one 5'-monophosphate deformylase of Methanocaldococcus infernus (strain DSM 11812 / JCM 15783 / ME).